Reading from the N-terminus, the 439-residue chain is Histidine--tRNA ligase (439 aa).

The protein belongs to the class-II aminoacyl-tRNA synthetase family. In terms of assembly, homodimer.

Its subcellular location is the cytoplasm. It catalyses the reaction tRNA(His) + L-histidine + ATP = L-histidyl-tRNA(His) + AMP + diphosphate + H(+). The sequence is that of Histidine--tRNA ligase from Clostridium tetani (strain Massachusetts / E88).